The following is a 217-amino-acid chain: Uracil-DNA glycosylase (217 aa).

Residue aspartate 62 is the Proton acceptor of the active site.

The protein belongs to the uracil-DNA glycosylase (UDG) superfamily. UNG family.

It is found in the cytoplasm. It catalyses the reaction Hydrolyzes single-stranded DNA or mismatched double-stranded DNA and polynucleotides, releasing free uracil.. Its function is as follows. Excises uracil residues from the DNA which can arise as a result of misincorporation of dUMP residues by DNA polymerase or due to deamination of cytosine. The sequence is that of Uracil-DNA glycosylase from Streptococcus pyogenes serotype M3 (strain ATCC BAA-595 / MGAS315).